We begin with the raw amino-acid sequence, 229 residues long: uncharacterized protein (229 aa).

7 helical membrane passes run 1–21 (MFGTIFNTVMIIAGSIIGGIF), 32–52 (ILMQAMGFAAVALGINAITQH), 58–78 (YPILFIVSLAIGGLLGQIINL), 100–120 (TAVLLFCIGSLSILGPVEAAL), 139–159 (IVLASTFGFGIAAAALVLFSW), 178–198 (LINEITIVGGILILSSGLSIL), and 206–226 (LNLLPSLLIPPVVIFVIHAFG).

The protein resides in the cell membrane. This is an uncharacterized protein from Bacillus subtilis (strain 168).